The primary structure comprises 381 residues: Selenoprotein P (381 aa).

The signal sequence occupies residues 1–19 (MWRSLGLALALCLLPLGGT). A glycan (N-linked (GlcNAc...) asparagine) is linked at Asn-46. Position 59 (Sec-59) is a non-standard amino acid, selenocysteine. 3 N-linked (GlcNAc...) asparagine glycosylation sites follow: Asn-83, Asn-119, and Asn-128. Residues 202–268 (SPHYHHEHHH…ENRDMPGSED (67 aa)) form a disordered region. Positions 204-217 (HYHHEHHHNHRHQH) are enriched in basic residues. Polar residues predominate over residues 218-229 (LGSSELSENQQP). Residues 243 to 255 (LHHHHKHKGQHRQ) show a composition bias toward basic residues. The residue at position 266 (Ser-266) is a Phosphoserine. Residues Sec-318 and Sec-330 are each a non-standard amino acid (selenocysteine). The N-linked (GlcNAc...) asparagine glycan is linked to Asn-338. Non-standard amino acids (selenocysteine) are located at Sec-345, Sec-352, Sec-367, Sec-369, Sec-376, and Sec-378. Residues 352–381 (UQISQQLIPTEASTSURUKNQAKKUEUPSN) form a disordered region. Positions 353-369 (QISQQLIPTEASTSURU) are enriched in polar residues.

This sequence belongs to the selenoprotein P family. Phosphorylation sites are present in the extracellular medium.

The protein resides in the secreted. Might be responsible for some of the extracellular antioxidant defense properties of selenium or might be involved in the transport of selenium. May supply selenium to tissues such as brain and testis. The polypeptide is Selenoprotein P (Pongo abelii (Sumatran orangutan)).